Consider the following 406-residue polypeptide: Leu/Ile/Val-binding protein homolog 5 (406 aa).

The N-terminal stretch at 1–29 is a signal peptide; sequence MIGTRLPAWTRVLACGVAGLSLMTISAKA.

It belongs to the leucine-binding protein family.

Component of an amino-acid transport system. This is Leu/Ile/Val-binding protein homolog 5 from Brucella suis biovar 1 (strain 1330).